Here is a 69-residue protein sequence, read N- to C-terminus: Large ribosomal subunit protein bL31 (69 aa).

Residues Cys16, Cys18, Cys38, and Cys41 each contribute to the Zn(2+) site.

It belongs to the bacterial ribosomal protein bL31 family. Type A subfamily. Part of the 50S ribosomal subunit. Zn(2+) is required as a cofactor.

Binds the 23S rRNA. The chain is Large ribosomal subunit protein bL31 from Cutibacterium acnes (strain DSM 16379 / KPA171202) (Propionibacterium acnes).